We begin with the raw amino-acid sequence, 440 residues long: Thymidine phosphorylase (440 aa).

It belongs to the thymidine/pyrimidine-nucleoside phosphorylase family. In terms of assembly, homodimer.

The enzyme catalyses thymidine + phosphate = 2-deoxy-alpha-D-ribose 1-phosphate + thymine. The protein operates within pyrimidine metabolism; dTMP biosynthesis via salvage pathway; dTMP from thymine: step 1/2. The enzymes which catalyze the reversible phosphorolysis of pyrimidine nucleosides are involved in the degradation of these compounds and in their utilization as carbon and energy sources, or in the rescue of pyrimidine bases for nucleotide synthesis. The chain is Thymidine phosphorylase from Klebsiella pneumoniae subsp. pneumoniae (strain ATCC 700721 / MGH 78578).